We begin with the raw amino-acid sequence, 380 residues long: DNA-directed RNA polymerase subunit Rpo1C (380 aa).

It belongs to the RNA polymerase beta' chain family. As to quaternary structure, part of the RNA polymerase complex.

The protein resides in the cytoplasm. It carries out the reaction RNA(n) + a ribonucleoside 5'-triphosphate = RNA(n+1) + diphosphate. In terms of biological role, DNA-dependent RNA polymerase (RNAP) catalyzes the transcription of DNA into RNA using the four ribonucleoside triphosphates as substrates. Forms part of the jaw domain. This Archaeoglobus fulgidus (strain ATCC 49558 / DSM 4304 / JCM 9628 / NBRC 100126 / VC-16) protein is DNA-directed RNA polymerase subunit Rpo1C.